We begin with the raw amino-acid sequence, 141 residues long: Large-conductance mechanosensitive channel (141 aa).

3 consecutive transmembrane segments (helical) span residues 14–34, 38–58, and 81–101; these read VMDLAVGVIIGGAFGGIVKSL, IIMPIVGAIFGGFDFSNYFLG, and GSFITVLINFLILAWIIFLMV.

This sequence belongs to the MscL family. In terms of assembly, homopentamer.

The protein localises to the cell inner membrane. Functionally, channel that opens in response to stretch forces in the membrane lipid bilayer. May participate in the regulation of osmotic pressure changes within the cell. This chain is Large-conductance mechanosensitive channel, found in Rhizobium rhizogenes (strain K84 / ATCC BAA-868) (Agrobacterium radiobacter).